The following is a 600-amino-acid chain: Putative fucosyltransferase R654 (600 aa).

The protein belongs to the glycosyltransferase 10 family.

The polypeptide is Putative fucosyltransferase R654 (Acanthamoeba polyphaga mimivirus (APMV)).